Consider the following 105-residue polypeptide: Nitrogen fixation nifHD region glnB-like protein 1 (105 aa).

It belongs to the P(II) protein family.

Could be involved in the regulation of nitrogen fixation. In Methanococcus maripaludis (Methanococcus deltae), this protein is Nitrogen fixation nifHD region glnB-like protein 1 (glnBI).